A 158-amino-acid polypeptide reads, in one-letter code: UPF0225 protein Pput_1155 (158 aa).

The protein belongs to the UPF0225 family.

In Pseudomonas putida (strain ATCC 700007 / DSM 6899 / JCM 31910 / BCRC 17059 / LMG 24140 / F1), this protein is UPF0225 protein Pput_1155.